We begin with the raw amino-acid sequence, 1102 residues long: MVKEMMKLAVFFISLLLILLISETTGLNLEGQYLLEIKSKFVDAKQNLRNWNSNDSVPCGWTGVMCSNYSSDPEVLSLNLSSMVLSGKLSPSIGGLVHLKQLDLSYNGLSGKIPKEIGNCSSLEILKLNNNQFDGEIPVEIGKLVSLENLIIYNNRISGSLPVEIGNLLSLSQLVTYSNNISGQLPRSIGNLKRLTSFRAGQNMISGSLPSEIGGCESLVMLGLAQNQLSGELPKEIGMLKKLSQVILWENEFSGFIPREISNCTSLETLALYKNQLVGPIPKELGDLQSLEFLYLYRNGLNGTIPREIGNLSYAIEIDFSENALTGEIPLELGNIEGLELLYLFENQLTGTIPVELSTLKNLSKLDLSINALTGPIPLGFQYLRGLFMLQLFQNSLSGTIPPKLGWYSDLWVLDMSDNHLSGRIPSYLCLHSNMIILNLGTNNLSGNIPTGITTCKTLVQLRLARNNLVGRFPSNLCKQVNVTAIELGQNRFRGSIPREVGNCSALQRLQLADNGFTGELPREIGMLSQLGTLNISSNKLTGEVPSEIFNCKMLQRLDMCCNNFSGTLPSEVGSLYQLELLKLSNNNLSGTIPVALGNLSRLTELQMGGNLFNGSIPRELGSLTGLQIALNLSYNKLTGEIPPELSNLVMLEFLLLNNNNLSGEIPSSFANLSSLLGYNFSYNSLTGPIPLLRNISMSSFIGNEGLCGPPLNQCIQTQPFAPSQSTGKPGGMRSSKIIAITAAVIGGVSLMLIALIVYLMRRPVRTVASSAQDGQPSEMSLDIYFPPKEGFTFQDLVAATDNFDESFVVGRGACGTVYKAVLPAGYTLAVKKLASNHEGGNNNNVDNSFRAEILTLGNIRHRNIVKLHGFCNHQGSNLLLYEYMPKGSLGEILHDPSCNLDWSKRFKIALGAAQGLAYLHHDCKPRIFHRDIKSNNILLDDKFEAHVGDFGLAKVIDMPHSKSMSAIAGSYGYIAPEYAYTMKVTEKSDIYSYGVVLLELLTGKAPVQPIDQGGDVVNWVRSYIRRDALSSGVLDARLTLEDERIVSHMLTVLKIALLCTSVSPVARPSMRQVVLMLIESERSEGEQEHLDTEELTQTTTP.

The N-terminal stretch at 1–26 (MVKEMMKLAVFFISLLLILLISETTG) is a signal peptide. Over 27-737 (LNLEGQYLLE…GKPGGMRSSK (711 aa)) the chain is Extracellular. 4 N-linked (GlcNAc...) asparagine glycosylation sites follow: asparagine 54, asparagine 68, asparagine 79, and asparagine 119. 26 LRR repeats span residues 72–96 (DPEV…IGGL), 97–120 (VHLK…IGNC), 122–144 (SLEI…IGKL), 145–170 (VSLE…NLLS), 172–192 (SQLV…IGNL), 193–216 (KRLT…IGGC), 217–241 (ESLV…GMLK), 243–264 (LSQV…ISNC), 265–288 (TSLE…LGDL), 289–312 (QSLE…IGNL), 314–336 (YAIE…LGNI), 337–360 (EGLE…LSTL), 361–383 (KNLS…GFQY), 385–408 (RGLF…LGWY), 409–432 (SDLW…LCLH), 433–456 (SNMI…ITTC), 458–480 (TLVQ…LCKQ), 481–504 (VNVT…VGNC), 505–528 (SALQ…IGML), 529–552 (SQLG…IFNC), 554–576 (MLQR…VGSL), 577–602 (YQLE…NLSR), 604–624 (TELQ…LGSL), 625–649 (TGLQ…LSNL), 651–672 (MLEF…SFAN), and 674–700 (SSLL…SMSS). A glycan (N-linked (GlcNAc...) asparagine) is linked at asparagine 180. An N-linked (GlcNAc...) asparagine glycan is attached at asparagine 263. N-linked (GlcNAc...) asparagine glycosylation is found at asparagine 302 and asparagine 311. Asparagine 362 carries N-linked (GlcNAc...) asparagine glycosylation. Asparagine 444 carries an N-linked (GlcNAc...) asparagine glycan. 2 N-linked (GlcNAc...) asparagine glycosylation sites follow: asparagine 482 and asparagine 503. Asparagine 535, asparagine 564, asparagine 588, asparagine 599, asparagine 614, asparagine 632, asparagine 661, asparagine 672, asparagine 680, and asparagine 695 each carry an N-linked (GlcNAc...) asparagine glycan. Residues 738–758 (IIAITAAVIGGVSLMLIALIV) form a helical membrane-spanning segment. The Cytoplasmic portion of the chain corresponds to 759–1102 (YLMRRPVRTV…TEELTQTTTP (344 aa)). Phosphothreonine is present on residues threonine 793 and threonine 801. Positions 804-1091 (FDESFVVGRG…ERSEGEQEHL (288 aa)) constitute a Protein kinase domain. ATP is bound by residues 810–818 (VGRGACGTV) and lysine 832. Phosphotyrosine occurs at positions 882 and 919. Aspartate 932 (proton acceptor) is an active-site residue. A Phosphoserine modification is found at serine 966. A phosphotyrosine mark is found at tyrosine 974 and tyrosine 981. The residue at position 982 (threonine 982) is a Phosphothreonine.

This sequence belongs to the protein kinase superfamily. Ser/Thr protein kinase family.

The protein localises to the cell membrane. It catalyses the reaction L-seryl-[protein] + ATP = O-phospho-L-seryl-[protein] + ADP + H(+). It carries out the reaction L-threonyl-[protein] + ATP = O-phospho-L-threonyl-[protein] + ADP + H(+). This is Probable leucine-rich repeat receptor-like protein kinase At5g63930 from Arabidopsis thaliana (Mouse-ear cress).